The following is a 1230-amino-acid chain: Myosin-1 (1230 aa).

The tract at residues 1–32 (MGISRRPKADKNASAADSAPGGKPNIQKAQFD) is disordered. The 675-residue stretch at 39–713 (VGVSDLTLIS…TLFALEHMRD (675 aa)) folds into the Myosin motor domain. An ATP-binding site is contributed by 132-139 (GESGAGKT). The tract at residues 403–485 (SIGILDIYGF…PGVFSAMKDA (83 aa)) is actin-binding. IQ domains are found at residues 717-737 (HNMAARIQRVWRAFLQIRIEA) and 738-763 (ATRIQRMFRKKREGKEFLELREKGHQ). The region spanning 771 to 961 (RRRYSLLGSR…TIHTQAGEPP (191 aa)) is the TH1 domain. Disordered regions lie at residues 945–1018 (QDHY…AARP), 1033–1065 (TRNTSVQSTQSTRAVPPPPPPAPPAPPPAPVSK), and 1116–1230 (AYLE…EDDW). Residues 1033 to 1045 (TRNTSVQSTQSTR) show a composition bias toward polar residues. Composition is skewed to pro residues over residues 1047 to 1062 (VPPPPPPAPPAPPPAP) and 1122 to 1142 (TPPPPPPVATRPAPPPAPGPP). Residues 1064–1123 (SKEPQYRVLYEFAGQSANEFSLKQGEIVTVLQKETNGWWLTKNVRGQGWAPTAYLEEVTP) form the SH3 domain. The span at 1179–1214 (RDSGMSISSNGSGNNSGRSTPTPSLAGGLAEALRAR) shows a compositional bias: low complexity.

This sequence belongs to the TRAFAC class myosin-kinesin ATPase superfamily. Myosin family.

It is found in the cytoplasm. The protein resides in the cytoskeleton. Its subcellular location is the actin patch. Type-I myosin implicated in the organization of the actin cytoskeleton. Required for proper actin cytoskeleton polarization. At the cell cortex, assembles in patch-like structures together with proteins from the actin-polymerizing machinery and promotes actin assembly. Functions as actin nucleation-promoting factor (NPF) for the Arp2/3 complex. The sequence is that of Myosin-1 (myoA) from Sclerotinia sclerotiorum (strain ATCC 18683 / 1980 / Ss-1) (White mold).